The sequence spans 425 residues: Serine--tRNA ligase (425 aa).

Residue 233 to 235 (TAE) coordinates L-serine. 264–266 (RRE) contacts ATP. Glu287 provides a ligand contact to L-serine. An ATP-binding site is contributed by 351–354 (EISS). Ser385 is an L-serine binding site.

Belongs to the class-II aminoacyl-tRNA synthetase family. Type-1 seryl-tRNA synthetase subfamily. As to quaternary structure, homodimer. The tRNA molecule binds across the dimer.

It localises to the cytoplasm. The catalysed reaction is tRNA(Ser) + L-serine + ATP = L-seryl-tRNA(Ser) + AMP + diphosphate + H(+). The enzyme catalyses tRNA(Sec) + L-serine + ATP = L-seryl-tRNA(Sec) + AMP + diphosphate + H(+). It functions in the pathway aminoacyl-tRNA biosynthesis; selenocysteinyl-tRNA(Sec) biosynthesis; L-seryl-tRNA(Sec) from L-serine and tRNA(Sec): step 1/1. Functionally, catalyzes the attachment of serine to tRNA(Ser). Is also able to aminoacylate tRNA(Sec) with serine, to form the misacylated tRNA L-seryl-tRNA(Sec), which will be further converted into selenocysteinyl-tRNA(Sec). The polypeptide is Serine--tRNA ligase (Prochlorococcus marinus (strain AS9601)).